The sequence spans 796 residues: High affinity nerve growth factor receptor (796 aa).

The N-terminal stretch at M1–G32 is a signal peptide. Residues A33–G423 are Extracellular-facing. Intrachain disulfides connect C36–C41 and C40–C50. N-linked (GlcNAc...) asparagine glycans are attached at residues N67, N95, N121, N188, N202, N253, N262, N281, N318, N323, N338, N358, and N401. 2 LRR repeats span residues L90 to F113 and R116 to G137. In terms of domain architecture, LRRCT spans N148–V193. C154 and C191 form a disulfide bridge. Ig-like C2-type domains are found at residues P194 to S283 and W299 to N365. A disulfide bridge links C215 with C265. The cysteines at positions 300 and 345 are disulfide-linked. Residues L424–L439 traverse the membrane as a helical segment. Topologically, residues N440–G796 are cytoplasmic. Residues M469 to I490 form an interaction with SQSTM1 region. Y496 is subject to Phosphotyrosine; by autocatalysis. One can recognise a Protein kinase domain in the interval I510–L781. L516–V524 contributes to the ATP binding site. The short motif at D537 to V541 is the DXXLL element. Residue K544 coordinates ATP. The DXXLL signature appears at D607 to L611. The active-site Proton acceptor is D650. A phosphotyrosine; by autocatalysis mark is found at Y676, Y680, Y681, and Y791.

Belongs to the protein kinase superfamily. Tyr protein kinase family. Insulin receptor subfamily. In terms of assembly, exists in a dynamic equilibrium between monomeric (low affinity) and dimeric (high affinity) structures. Homodimerization is induced by binding of a NGF dimer. Interacts with SQSTM1; bridges NTRK1 to NGFR. Forms a ternary complex with NGFR and KIDINS220; this complex is affected by the expression levels of KIDINS220 and an increase in KIDINS220 expression leads to a decreased association of NGFR and NTRK1. Interacts with SH2D1A; regulates NTRK1. Interacts (phosphorylated upon activation by NGF) with SHC1; mediates SHC1 phosphorylation and activation. Interacts (phosphorylated upon activation by NGF) with PLCG1; mediates PLCG1 phosphorylation and activation. Interacts (phosphorylated) with SH2B1 and SH2B2. Interacts with GRB2. Interacts with PIK3R1. Interacts with FRS2. Interacts with SORT1; may regulate NTRK1 anterograde axonal transport. Interacts with RAB7A. Found in a complex, at least composed of KIDINS220, MAGI2, NTRK1 and RAPGEF2; the complex is mainly formed at late endosomes in a nerve growth factor (NGF)-dependent manner. Interacts with RAPGEF2; the interaction is strengthened after NGF stimulation. Interacts with PTPRS. Interacts with USP36; USP36 does not deubiquitinate NTRK1. Interacts with GGA3. Interacts with TSPAN1; this interaction promotes NTRK1 stability. Post-translationally, ligand-mediated autophosphorylation. Interaction with SQSTM1 is phosphotyrosine-dependent. Autophosphorylation at Tyr-496 mediates interaction and phosphorylation of SHC1. N-glycosylated. Isoform TrkA-I and isoform TrkA-II are N-glycosylated. In terms of processing, ubiquitinated. Undergoes polyubiquitination upon activation; regulated by NGFR. Ubiquitination by NEDD4L leads to degradation. Ubiquitination regulates the internalization of the receptor. As to expression, isoform TrkA-I is found in most non-neuronal tissues. Isoform TrkA-II is primarily expressed in neuronal cells. TrkA-III is specifically expressed by pluripotent neural stem and neural crest progenitors.

The protein resides in the cell membrane. It localises to the early endosome membrane. The protein localises to the late endosome membrane. Its subcellular location is the recycling endosome membrane. The catalysed reaction is L-tyrosyl-[protein] + ATP = O-phospho-L-tyrosyl-[protein] + ADP + H(+). With respect to regulation, the pro-survival signaling effect of NTRK1 in neurons requires its endocytosis into signaling early endosomes and its retrograde axonal transport. This is regulated by different proteins including CFL1, RAC1 and SORT1. NTF3 is unable to induce this signaling probably due to the lability of the NTF3-NTRK1 complex in endosomes. SH2D1A inhibits the autophosphorylation of the receptor, and alters the recruitment and activation of downstream effectors and signaling cascades. Regulated by NGFR. Its function is as follows. Receptor tyrosine kinase involved in the development and the maturation of the central and peripheral nervous systems through regulation of proliferation, differentiation and survival of sympathetic and nervous neurons. High affinity receptor for NGF which is its primary ligand. Can also bind and be activated by NTF3/neurotrophin-3. However, NTF3 only supports axonal extension through NTRK1 but has no effect on neuron survival. Upon dimeric NGF ligand-binding, undergoes homodimerization, autophosphorylation and activation. Recruits, phosphorylates and/or activates several downstream effectors including SHC1, FRS2, SH2B1, SH2B2 and PLCG1 that regulate distinct overlapping signaling cascades driving cell survival and differentiation. Through SHC1 and FRS2 activates a GRB2-Ras-MAPK cascade that regulates cell differentiation and survival. Through PLCG1 controls NF-Kappa-B activation and the transcription of genes involved in cell survival. Through SHC1 and SH2B1 controls a Ras-PI3 kinase-AKT1 signaling cascade that is also regulating survival. In absence of ligand and activation, may promote cell death, making the survival of neurons dependent on trophic factors. In terms of biological role, resistant to NGF, it constitutively activates AKT1 and NF-kappa-B and is unable to activate the Ras-MAPK signaling cascade. Antagonizes the anti-proliferative NGF-NTRK1 signaling that promotes neuronal precursors differentiation. Isoform TrkA-III promotes angiogenesis and has oncogenic activity when overexpressed. This chain is High affinity nerve growth factor receptor (NTRK1), found in Homo sapiens (Human).